The primary structure comprises 271 residues: Chitinase 6 (271 aa).

Positions 1–20 (MARRLSLLAVVLAMVAAVSA) are cleaved as a signal peptide. In terms of domain architecture, Chitin-binding type-1 spans 25–60 (AQSCGCASDQCCSKWGFCGTGSDYCGTGCQAGPCDV). 6 disulfides stabilise this stretch: cysteine 28–cysteine 36, cysteine 30–cysteine 42, cysteine 35–cysteine 49, cysteine 88–cysteine 137, cysteine 150–cysteine 159, and cysteine 239–cysteine 271. Residue glutamate 132 is the Proton donor of the active site. Asparagine 268 carries an N-linked (GlcNAc...) asparagine glycan.

It belongs to the glycosyl hydrolase 19 family. Chitinase class IV subfamily. As to expression, expressed in roots, leaves, sheaths and meristems.

The catalysed reaction is Random endo-hydrolysis of N-acetyl-beta-D-glucosaminide (1-&gt;4)-beta-linkages in chitin and chitodextrins.. In terms of biological role, may function in reproductive organs during embryogenesis and seed maturation. In Oryza sativa subsp. japonica (Rice), this protein is Chitinase 6 (Cht6).